We begin with the raw amino-acid sequence, 324 residues long: RING-H2 finger protein ATL3 (324 aa).

The chain crosses the membrane as a helical span at residues 24-44 (IILTAIIVLFMAVLFVLILHL). Residues 127–169 (CSICLSELVKGDKARLLPKCNHSFHVECIDMWFQSHSTCPICR) form an RING-type; atypical zinc finger. 3 disordered regions span residues 179 to 210 (SSKR…STSS), 226 to 248 (VSTG…ASQS), and 299 to 324 (RDKR…SVDP). Polar residues-rich tracts occupy residues 192-210 (NAGT…STSS) and 226-235 (VSTGNTNVGT). Residues 306–324 (SNSSTSNSSSSNAVASVDP) show a composition bias toward low complexity.

This sequence belongs to the RING-type zinc finger family. ATL subfamily.

Its subcellular location is the membrane. It carries out the reaction S-ubiquitinyl-[E2 ubiquitin-conjugating enzyme]-L-cysteine + [acceptor protein]-L-lysine = [E2 ubiquitin-conjugating enzyme]-L-cysteine + N(6)-ubiquitinyl-[acceptor protein]-L-lysine.. It functions in the pathway protein modification; protein ubiquitination. The chain is RING-H2 finger protein ATL3 (ATL3) from Arabidopsis thaliana (Mouse-ear cress).